The primary structure comprises 63 residues: Large ribosomal subunit protein uL30 (63 aa).

Belongs to the universal ribosomal protein uL30 family. In terms of assembly, part of the 50S ribosomal subunit.

This chain is Large ribosomal subunit protein uL30, found in Rickettsia akari (strain Hartford).